The sequence spans 456 residues: MLNSAMSVVILAAGKGTRMYSDIPKVLHTLAGKPMVQHVIDAATKLGAAQVHLVYGHGGELLKQTLKDDKLNWVLQAEQLGTGHAMQQAAPFFSDDEDILMLYGDVPLISVETLQRLRDAKPQGGIGLLTVKLDDPSGYGRITRENGKVTGIVEHKDATDEQRQIQEINTGILIANGADLKRWLSKLTNNNAQGEYYITDIIALAYHEGREIAAVHPARISETDGVNNRLQLSRLERIYQAEQAEKLLLSGVMLRDPARFDLRGNLAHGRDVEIDANVIIEGNVTLGHRVKIGAGCIIKNSVIGDDCEISPYSVVEDAHLEAACTIGPFARLRPGAELLAGAHVGNFVEMKKARLGKGSKAGHLTYLGDAEIGDNVNIGAGTITCNYDGANKFKTVIGDDVFVGSDTQLVAPVTVGKGATIAAGTTVTRNVADNELVLSRVPQVHKQGWQRPVKKK.

The pyrophosphorylase stretch occupies residues 1–229 (MLNSAMSVVI…ISETDGVNNR (229 aa)). Residues 11–14 (LAAG), lysine 25, glutamine 76, 81–82 (GT), 103–105 (YGD), glycine 140, glutamate 154, asparagine 169, and asparagine 227 contribute to the UDP-N-acetyl-alpha-D-glucosamine site. A Mg(2+)-binding site is contributed by aspartate 105. A Mg(2+)-binding site is contributed by asparagine 227. Positions 230 to 250 (LQLSRLERIYQAEQAEKLLLS) are linker. Positions 251 to 456 (GVMLRDPARF…QGWQRPVKKK (206 aa)) are N-acetyltransferase. UDP-N-acetyl-alpha-D-glucosamine-binding residues include arginine 333 and lysine 351. Histidine 363 acts as the Proton acceptor in catalysis. UDP-N-acetyl-alpha-D-glucosamine contacts are provided by tyrosine 366 and asparagine 377. Acetyl-CoA-binding positions include alanine 380, 386–387 (NY), serine 405, alanine 423, and arginine 440.

The protein in the N-terminal section; belongs to the N-acetylglucosamine-1-phosphate uridyltransferase family. It in the C-terminal section; belongs to the transferase hexapeptide repeat family. Homotrimer. Mg(2+) serves as cofactor.

It localises to the cytoplasm. It carries out the reaction alpha-D-glucosamine 1-phosphate + acetyl-CoA = N-acetyl-alpha-D-glucosamine 1-phosphate + CoA + H(+). It catalyses the reaction N-acetyl-alpha-D-glucosamine 1-phosphate + UTP + H(+) = UDP-N-acetyl-alpha-D-glucosamine + diphosphate. It functions in the pathway nucleotide-sugar biosynthesis; UDP-N-acetyl-alpha-D-glucosamine biosynthesis; N-acetyl-alpha-D-glucosamine 1-phosphate from alpha-D-glucosamine 6-phosphate (route II): step 2/2. It participates in nucleotide-sugar biosynthesis; UDP-N-acetyl-alpha-D-glucosamine biosynthesis; UDP-N-acetyl-alpha-D-glucosamine from N-acetyl-alpha-D-glucosamine 1-phosphate: step 1/1. Its pathway is bacterial outer membrane biogenesis; LPS lipid A biosynthesis. Its function is as follows. Catalyzes the last two sequential reactions in the de novo biosynthetic pathway for UDP-N-acetylglucosamine (UDP-GlcNAc). The C-terminal domain catalyzes the transfer of acetyl group from acetyl coenzyme A to glucosamine-1-phosphate (GlcN-1-P) to produce N-acetylglucosamine-1-phosphate (GlcNAc-1-P), which is converted into UDP-GlcNAc by the transfer of uridine 5-monophosphate (from uridine 5-triphosphate), a reaction catalyzed by the N-terminal domain. This Salmonella schwarzengrund (strain CVM19633) protein is Bifunctional protein GlmU.